The primary structure comprises 121 residues: Small ribosomal subunit protein bS6 (121 aa).

The disordered stretch occupies residues 99-121 (PSLMMRNVEREEARKTQQQEFAA). A compositionally biased stretch (basic and acidic residues) spans 105–115 (NVEREEARKTQ).

This sequence belongs to the bacterial ribosomal protein bS6 family.

Binds together with bS18 to 16S ribosomal RNA. The protein is Small ribosomal subunit protein bS6 of Polaromonas naphthalenivorans (strain CJ2).